A 49-amino-acid chain; its full sequence is Large ribosomal subunit protein bL33B (49 aa).

This sequence belongs to the bacterial ribosomal protein bL33 family.

This Geobacillus thermodenitrificans (strain NG80-2) protein is Large ribosomal subunit protein bL33B.